A 461-amino-acid polypeptide reads, in one-letter code: Cysteine--tRNA ligase (461 aa).

Cys31 contacts Zn(2+). Positions 33-43 (PTVYDFAHIGN) match the 'HIGH' region motif. 3 residues coordinate Zn(2+): Cys219, His244, and Glu248. A 'KMSKS' region motif is present at residues 277–281 (KMSKS). ATP is bound at residue Lys280. Basic and acidic residues predominate over residues 436 to 452 (SEKGIQLKDGKDKETGE). A disordered region spans residues 436-461 (SEKGIQLKDGKDKETGERTTTWELKR).

It belongs to the class-I aminoacyl-tRNA synthetase family. As to quaternary structure, monomer. Zn(2+) is required as a cofactor.

It localises to the cytoplasm. The catalysed reaction is tRNA(Cys) + L-cysteine + ATP = L-cysteinyl-tRNA(Cys) + AMP + diphosphate. The polypeptide is Cysteine--tRNA ligase (Agrobacterium fabrum (strain C58 / ATCC 33970) (Agrobacterium tumefaciens (strain C58))).